The sequence spans 37 residues: Large ribosomal subunit protein bL36 (37 aa).

Belongs to the bacterial ribosomal protein bL36 family.

This chain is Large ribosomal subunit protein bL36, found in Staphylococcus epidermidis (strain ATCC 35984 / DSM 28319 / BCRC 17069 / CCUG 31568 / BM 3577 / RP62A).